The following is a 172-amino-acid chain: Centrin-1 (172 aa).

The segment at 1 to 30 (MASSYRKPTVASTSQKRKVGPKPELTEEQK) is disordered. EF-hand domains follow at residues 28–63 (EQKQ…LGFE), 64–99 (PRKE…KMAE), 101–136 (DTKE…LGEN), and 137–172 (LTDE…TNLY). Asp41, Asp43, Ser45, Thr47, and Glu52 together coordinate Ca(2+). The Ca(2+) site is built by Asp150, Asp152, Asp154, Glu156, and Glu161.

The protein belongs to the centrin family. Monomer. Interacts with CIMAP3. Interacts with USP49.

It localises to the cytoplasm. Its subcellular location is the cytoskeleton. It is found in the microtubule organizing center. The protein resides in the centrosome. Functionally, plays a fundamental role in microtubule-organizing center structure and function. Plays a role in sperm cilia formation. In Bos taurus (Bovine), this protein is Centrin-1 (CETN1).